The following is a 326-amino-acid chain: Ficolin-1 (326 aa).

The signal sequence occupies residues 1–29 (MELSGATMARGLAVLLVLFLHIKNLPAQA). Residues 55-93 (GLPGAPGPKGEAGVIGERGERGLPGAPGKAGPVGPKGDR) enclose the Collagen-like domain. Residues 72–111 (RGERGLPGAPGKAGPVGPKGDRGEKGMRGEKGDAGQSQSC) form a disordered region. Positions 77-89 (LPGAPGKAGPVGP) are enriched in low complexity. Residues 90 to 104 (KGDRGEKGMRGEKGD) show a composition bias toward basic and acidic residues. Residues 109 to 326 (QSCATGPRNC…KVSEMKVRPA (218 aa)) enclose the Fibrinogen C-terminal domain. Intrachain disulfides connect Cys-111–Cys-139 and Cys-118–Cys-146. The segment at 115–154 (PRNCKDLLDRGYFLSGWHTIYLPDCRPLTVLCDMDTDGGG) is a domain; contributes to trimerization. Positions 155–243 (WTVFQRRMDG…LVLGAFVGGS (89 aa)) are b domain; contributes to trimerization. 4 residues coordinate Ca(2+): Asp-262, Asp-264, Ser-266, and Ser-268. Cys-270 and Cys-283 are disulfide-bonded. 282-284 (DCH) serves as a coordination point for a carbohydrate. An N-linked (GlcNAc...) asparagine glycan is attached at Asn-305. Residues 317-326 (KVSEMKVRPA) are p domain.

Belongs to the ficolin lectin family. Homotrimer. Interacts with elastin/ELN. Interacts (via Fibrinogen C-terminal domain) with FFAR2. Interacts with CRP; may regulate monocyte activation by FCN1. In terms of tissue distribution, peripheral blood leukocytes, monocytes and granulocytes. Also detected in spleen, lung, and thymus, may be due to the presence of tissue macrophages or trapped blood in these tissues. Not detected on lymphocytes.

The protein resides in the secreted. It is found in the cell membrane. Extracellular lectin functioning as a pattern-recognition receptor in innate immunity. Binds the sugar moieties of pathogen-associated molecular patterns (PAMPs) displayed on microbes and activates the lectin pathway of the complement system. May also activate monocytes through a G protein-coupled receptor, FFAR2, inducing the secretion of interleukin-8/IL-8. Binds preferentially to 9-O-acetylated 2-6-linked sialic acid derivatives and to various glycans containing sialic acid engaged in a 2-3 linkage. This is Ficolin-1 (FCN1) from Homo sapiens (Human).